The following is a 436-amino-acid chain: Adenylyltransferase and sulfurtransferase UBA4 (436 aa).

Residues Gly-74, Asp-95, 102-106 (SNLHR), Lys-119, and 163-164 (DT) contribute to the ATP site. Positions 205 and 208 each coordinate Zn(2+). The active-site Glycyl thioester intermediate; for adenylyltransferase activity is the Cys-222. Zn(2+) contacts are provided by Cys-283 and Cys-286. The 100-residue stretch at 335 to 434 (NEKDHILIDV…YIDEEDHSYP (100 aa)) folds into the Rhodanese domain. The Cysteine persulfide intermediate; for sulfurtransferase activity role is filled by Cys-393.

It in the N-terminal section; belongs to the HesA/MoeB/ThiF family. UBA4 subfamily. The cofactor is Zn(2+).

It localises to the cytoplasm. It is found in the cytosol. The protein operates within tRNA modification; 5-methoxycarbonylmethyl-2-thiouridine-tRNA biosynthesis. Plays a central role in 2-thiolation of mcm(5)S(2)U at tRNA wobble positions of cytosolic tRNA(Lys), tRNA(Glu) and tRNA(Gln). Acts by mediating the C-terminal thiocarboxylation of sulfur carrier URM1. Its N-terminus first activates URM1 as acyl-adenylate (-COAMP), then the persulfide sulfur on the catalytic cysteine is transferred to URM1 to form thiocarboxylation (-COSH) of its C-terminus. The reaction probably involves hydrogen sulfide that is generated from the persulfide intermediate and that acts as a nucleophile towards URM1. Subsequently, a transient disulfide bond is formed. Does not use thiosulfate as sulfur donor; NFS1 probably acting as a sulfur donor for thiocarboxylation reactions. Prior mcm(5) tRNA modification by the elongator complex is required for 2-thiolation. May also be involved in protein urmylation. This Vanderwaltozyma polyspora (strain ATCC 22028 / DSM 70294 / BCRC 21397 / CBS 2163 / NBRC 10782 / NRRL Y-8283 / UCD 57-17) (Kluyveromyces polysporus) protein is Adenylyltransferase and sulfurtransferase UBA4.